We begin with the raw amino-acid sequence, 460 residues long: Probable carboxylesterase 11 (460 aa).

2 stretches are compositionally biased toward polar residues: residues Gln-26–Asp-35 and Asn-132–Ala-145. Disordered stretches follow at residues Gln-26–Pro-52 and Asn-132–Gly-161. Residues His-173 to Gly-175 carry the Involved in the stabilization of the negatively charged intermediate by the formation of the oxyanion hole motif. Active-site residues include Ser-289, Asp-392, and His-422.

Belongs to the 'GDXG' lipolytic enzyme family. In terms of tissue distribution, expressed in roots, leaves, stems, flowers and siliques.

The enzyme catalyses a carboxylic ester + H2O = an alcohol + a carboxylate + H(+). Its function is as follows. Carboxylesterase acting on esters with varying acyl chain length. This is Probable carboxylesterase 11 (CXE11) from Arabidopsis thaliana (Mouse-ear cress).